Consider the following 51-residue polypeptide: Large ribosomal subunit protein eL39 (51 aa).

This sequence belongs to the eukaryotic ribosomal protein eL39 family.

The protein is Large ribosomal subunit protein eL39 of Methanosarcina barkeri (strain Fusaro / DSM 804).